The chain runs to 265 residues: Glutamate racemase (265 aa).

Residues D10 to S11 and Y42 to G43 contribute to the substrate site. C73 (proton donor/acceptor) is an active-site residue. N74–T75 contributes to the substrate binding site. Catalysis depends on C180, which acts as the Proton donor/acceptor. T181–H182 serves as a coordination point for substrate.

This sequence belongs to the aspartate/glutamate racemases family.

The enzyme catalyses L-glutamate = D-glutamate. It participates in cell wall biogenesis; peptidoglycan biosynthesis. Provides the (R)-glutamate required for cell wall biosynthesis. The polypeptide is Glutamate racemase (Synechococcus sp. (strain CC9605)).